The chain runs to 378 residues: Erythronate-4-phosphate dehydrogenase (378 aa).

2 residues coordinate substrate: S45 and T66. Residues D146 and T175 each contribute to the NAD(+) site. R208 is an active-site residue. Residue D232 participates in NAD(+) binding. Residue E237 is part of the active site. H254 (proton donor) is an active-site residue. G257 lines the NAD(+) pocket. Residue Y258 coordinates substrate.

It belongs to the D-isomer specific 2-hydroxyacid dehydrogenase family. PdxB subfamily. As to quaternary structure, homodimer.

It localises to the cytoplasm. It carries out the reaction 4-phospho-D-erythronate + NAD(+) = (R)-3-hydroxy-2-oxo-4-phosphooxybutanoate + NADH + H(+). Its pathway is cofactor biosynthesis; pyridoxine 5'-phosphate biosynthesis; pyridoxine 5'-phosphate from D-erythrose 4-phosphate: step 2/5. Its function is as follows. Catalyzes the oxidation of erythronate-4-phosphate to 3-hydroxy-2-oxo-4-phosphonooxybutanoate. This is Erythronate-4-phosphate dehydrogenase from Escherichia coli O45:K1 (strain S88 / ExPEC).